We begin with the raw amino-acid sequence, 305 residues long: Serine/threonine-protein kinase 16 (305 aa).

The N-myristoyl glycine moiety is linked to residue Gly-2. S-palmitoyl cysteine attachment occurs at residues Cys-6 and Cys-8. Residues 20–293 (YLFVQKLGEG…PVLLSQLEAL (274 aa)) form the Protein kinase domain. ATP contacts are provided by residues 26–34 (LGEGGFSYV) and Lys-49. Asp-148 functions as the Proton acceptor in the catalytic mechanism. Residues 166–202 (DLGSMNQACIQVEGSRQALALQDWAAQRCTISYRAPE) form an activation loop region. Ser-197 carries the post-translational modification Phosphoserine; by autocatalysis. The residue at position 198 (Tyr-198) is a Phosphotyrosine; by autocatalysis.

The protein belongs to the protein kinase superfamily. Ser/Thr protein kinase family. Monomer. Interacts with DRG1 (via its N-terminal); the interaction phosphorylates DRG1. In terms of processing, mainly autophosphorylated on serine/threonine residues. Also autophosphorylated on Tyr-198. Expressed in heart, liver, brain, spleen, lung, skeletal muscle, kidney and testis.

It is found in the cytoplasm. The protein resides in the perinuclear region. The protein localises to the membrane. The catalysed reaction is L-seryl-[protein] + ATP = O-phospho-L-seryl-[protein] + ADP + H(+). The enzyme catalyses L-threonyl-[protein] + ATP = O-phospho-L-threonyl-[protein] + ADP + H(+). It carries out the reaction L-tyrosyl-[protein] + ATP = O-phospho-L-tyrosyl-[protein] + ADP + H(+). In terms of biological role, membrane-associated protein kinase that phosphorylates on serine and threonine residues. In vitro substrates include DRG1, ENO1 and EIF4EBP1. Also autophosphorylates. May be involved in secretory vesicle trafficking or intracellular signaling. May have a role in regulating stromal-epithelial interactions that occur during ductal morphogenesis in the mammary gland. May be involved in TGF-beta signaling. Able to autophosphorylate on Tyr residue; it is however unclear whether it has tyrosine-protein kinase toward other proteins. The polypeptide is Serine/threonine-protein kinase 16 (Stk16) (Rattus norvegicus (Rat)).